A 273-amino-acid chain; its full sequence is Diaminopimelate epimerase (273 aa).

Residues Asn11 and Asn60 each contribute to the substrate site. Cys69 serves as the catalytic Proton donor. Residues 70–71 (GN), Asn181, and 199–200 (ER) contribute to the substrate site. Catalysis depends on Cys209, which acts as the Proton acceptor. Residue 210–211 (GT) coordinates substrate.

This sequence belongs to the diaminopimelate epimerase family. In terms of assembly, homodimer.

It is found in the cytoplasm. It carries out the reaction (2S,6S)-2,6-diaminopimelate = meso-2,6-diaminopimelate. The protein operates within amino-acid biosynthesis; L-lysine biosynthesis via DAP pathway; DL-2,6-diaminopimelate from LL-2,6-diaminopimelate: step 1/1. Functionally, catalyzes the stereoinversion of LL-2,6-diaminopimelate (L,L-DAP) to meso-diaminopimelate (meso-DAP), a precursor of L-lysine and an essential component of the bacterial peptidoglycan. In Helicobacter pylori (strain Shi470), this protein is Diaminopimelate epimerase.